We begin with the raw amino-acid sequence, 258 residues long: Diacetyl reductase [(S)-acetoin forming] (258 aa).

8–32 (LVTGGAQGIGFKIAERLVEDGFKVA) is an NAD(+) binding site. S141 lines the substrate pocket. The active-site Proton acceptor is the Y154. K158 is a catalytic residue.

This sequence belongs to the short-chain dehydrogenases/reductases (SDR) family.

It carries out the reaction (S)-acetoin + NAD(+) = diacetyl + NADH + H(+). Catalyzes the irreversible reduction of 2,3-butanediol to (S)-acetoin in the presence of NADH. The chain is Diacetyl reductase [(S)-acetoin forming] (butA) from Staphylococcus aureus (strain Mu50 / ATCC 700699).